The sequence spans 375 residues: Alcohol dehydrogenase 1 (375 aa).

An N-acetylserine modification is found at serine 2. Zn(2+)-binding residues include cysteine 47, histidine 68, cysteine 98, cysteine 101, cysteine 104, cysteine 112, and cysteine 175. NAD(+)-binding positions include 200–205 (WSGRVG), aspartate 224, and lysine 229. N6-succinyllysine is present on lysine 234. 293 to 295 (VGV) provides a ligand contact to NAD(+). Residue lysine 340 is modified to N6-succinyllysine. Arginine 370 contributes to the NAD(+) binding site.

The protein belongs to the zinc-containing alcohol dehydrogenase family. Class-I subfamily. Homodimer. Requires Zn(2+) as cofactor.

The protein resides in the cytoplasm. It carries out the reaction a primary alcohol + NAD(+) = an aldehyde + NADH + H(+). The catalysed reaction is a secondary alcohol + NAD(+) = a ketone + NADH + H(+). The protein is Alcohol dehydrogenase 1 (ADH1) of Geomys knoxjonesi (Jones' pocket gopher).